Here is a 249-residue protein sequence, read N- to C-terminus: uncharacterized protein (249 aa).

It localises to the cytoplasm. The protein resides in the nucleus. Its subcellular location is the nucleolus. This is an uncharacterized protein from Schizosaccharomyces pombe (strain 972 / ATCC 24843) (Fission yeast).